Reading from the N-terminus, the 416-residue chain is Enterobactin exporter EntS (416 aa).

The Cytoplasmic portion of the chain corresponds to 1-21; that stretch reads MNRQSWLLNLSLLKTHPAFRA. The chain crosses the membrane as a helical span at residues 22-42; it reads VFLARFISIVSLGLLGVAVPV. Residues 43-55 lie on the Periplasmic side of the membrane; that stretch reads QIQMMTHSTWQVG. The helical transmembrane segment at 56-76 threads the bilayer; it reads LSVTLTGSAMFVGLMVGGVLA. The Cytoplasmic segment spans residues 77 to 83; the sequence is DRYERKK. The helical transmembrane segment at 84-104 threads the bilayer; that stretch reads VILLARGTCGIGFIGLCLNAL. Residues 105–109 lie on the Periplasmic side of the membrane; it reads LPEPS. The helical transmembrane segment at 110–130 threads the bilayer; it reads LLAIYLLGLWDGFFASLGVTA. The Cytoplasmic segment spans residues 131-156; that stretch reads LLAATPALVGRENLMQAGAITMLTVR. A helical transmembrane segment spans residues 157–177; sequence LGSVISPMLGGVLLATGGVAW. Position 178 (N178) is a topological domain, periplasmic. The helical transmembrane segment at 179-199 threads the bilayer; it reads YGLAAAGTFITLLPLLSLPAL. Residues 200 to 218 are Cytoplasmic-facing; it reads PPPPQPREHPLKSLLAAFR. The helical transmembrane segment at 219-239 threads the bilayer; sequence FLLSSPLIGGIALLGGLLTMA. At 240–256 the chain is on the periplasmic side; the sequence is SAVRVLYPALAINWHMS. A helical transmembrane segment spans residues 257 to 277; that stretch reads AAQIGLLYAAIPLGAAVGALT. The Cytoplasmic portion of the chain corresponds to 278 to 287; sequence SGQLAHSVRP. Residues 288–307 form a helical membrane-spanning segment; sequence GLLMLVSTVGSFLAIGVFGL. Residues 308-313 are Periplasmic-facing; sequence MPVWLL. A helical membrane pass occupies residues 314 to 336; the sequence is GVICLALFGWLSAISSLLQYTLL. At 337–356 the chain is on the cytoplasmic side; that stretch reads QTQTPEAMLGRINGLWTAQN. Residues 357–377 traverse the membrane as a helical segment; that stretch reads VTGDAIGAALLGGLGAMMTPV. A378 is a topological domain (periplasmic). A helical membrane pass occupies residues 379 to 399; it reads SASVSGFGLVIVGLLLMLLLG. At 400–416 the chain is on the cytoplasmic side; sequence ELRRFRQPPPVPDGAPL.

Belongs to the major facilitator superfamily. EntS (TC 2.A.1.38) family.

The protein localises to the cell inner membrane. Functionally, component of an export pathway for enterobactin. The polypeptide is Enterobactin exporter EntS (Citrobacter koseri (strain ATCC BAA-895 / CDC 4225-83 / SGSC4696)).